A 339-amino-acid polypeptide reads, in one-letter code: Replication factor C subunit 4 (339 aa).

An ATP-binding site is contributed by 49–56; sequence GPPGTGKT.

This sequence belongs to the activator 1 small subunits family. As to quaternary structure, heterotetramer of subunits RFC2, RFC3, RFC4 and RFC5 that can form a complex with RFC1.

The protein localises to the nucleus. May be involved in DNA replication and thus regulate cell proliferation. This chain is Replication factor C subunit 4 (RFC4), found in Arabidopsis thaliana (Mouse-ear cress).